A 340-amino-acid chain; its full sequence is Ephrin-B3 (340 aa).

An N-terminal signal peptide occupies residues 1 to 27 (MGAPHFGPGGVQVGALLLLGFAGLVSG). The 140-residue stretch at 28-167 (LSLEPVYWNS…TRGMKVLLRV (140 aa)) folds into the Ephrin RBD domain. Residues 28–227 (LSLEPVYWNS…GPLPPPSMPA (200 aa)) are Extracellular-facing. 2 disulfide bridges follow: C62-C104 and C92-C156. The interval 168–227 (GQSPRGGAVPRKPVSEMPMERDRGAAHSAEPGRDTIPGDPSSNATSRGAEGPLPPPSMPA) is disordered. The span at 185-200 (PMERDRGAAHSAEPGR) shows a compositional bias: basic and acidic residues. The N-linked (GlcNAc...) asparagine glycan is linked to N210. A helical membrane pass occupies residues 228–248 (VAGAAGGMALLLLGVAGAGGA). The Cytoplasmic portion of the chain corresponds to 249–340 (MCWRRRRAKP…QSPPNIYYKV (92 aa)). Residues 254–300 (RRAKPSESRHPGPGSFGRGGSLGLGGGGGMGPREAEPGELGIALRGG) form a disordered region. Gly residues predominate over residues 267 to 284 (GSFGRGGSLGLGGGGGMG). R271 is modified (omega-N-methylarginine). At S274 the chain carries Phosphoserine. Positions 338–340 (YKV) match the PDZ-binding motif.

Belongs to the ephrin family. As to quaternary structure, interacts with GRIP1 and GRIP2. In terms of tissue distribution, expressed on lateral floor plate cells, specifically on commissural axon segments that have passed through the floor plate. Expressed in cells of the retinal ganglion cell layer during retinal axon guidance to the optic disk. Expressed in myogenic progenitor cells.

The protein localises to the membrane. Cell surface transmembrane ligand for Eph receptors, a family of receptor tyrosine kinases which are crucial for migration, repulsion and adhesion during neuronal, vascular and epithelial development. Binds promiscuously Eph receptors residing on adjacent cells, leading to contact-dependent bidirectional signaling into neighboring cells. The signaling pathway downstream of the receptor is referred to as forward signaling while the signaling pathway downstream of the ephrin ligand is referred to as reverse signaling. May play a pivotal role in forebrain function. Binds to, and induce the collapse of, commissural axons/growth cones in vitro. May play a role in constraining the orientation of longitudinally projecting axons. The protein is Ephrin-B3 (Efnb3) of Mus musculus (Mouse).